The following is a 244-amino-acid chain: Cell division protein ZapD (244 aa).

It belongs to the ZapD family. As to quaternary structure, interacts with FtsZ.

The protein localises to the cytoplasm. Its function is as follows. Cell division factor that enhances FtsZ-ring assembly. Directly interacts with FtsZ and promotes bundling of FtsZ protofilaments, with a reduction in FtsZ GTPase activity. In Shewanella baltica (strain OS223), this protein is Cell division protein ZapD.